Here is a 1013-residue protein sequence, read N- to C-terminus: GTPase-activating Rap/Ran-GAP domain-like protein 3 (1013 aa).

S45 bears the Phosphoserine mark. One can recognise a Rap-GAP domain in the interval 191–407 (LLVLEEQEGS…RTLDMLIRSL (217 aa)). Residues S426 and S432 each carry the phosphoserine modification. Residues 489–800 (PHEAVCADPW…QLVASRSDIY (312 aa)) form the CNH domain. Disordered regions lie at residues 810 to 842 (VSSG…SLGE) and 913 to 1013 (LLGL…IDLK). Over residues 811 to 821 (SSGGSSKGASA) the composition is skewed to low complexity. Position 827 is a phosphothreonine (T827). Over residues 952–962 (SSSSDRIPSGS) the composition is skewed to low complexity. 2 stretches are compositionally biased toward polar residues: residues 963–982 (LESA…SSDQ) and 993–1003 (VSGSSPFQLTA).

It belongs to the GARNL3 family.

In Homo sapiens (Human), this protein is GTPase-activating Rap/Ran-GAP domain-like protein 3 (GARNL3).